The chain runs to 75 residues: MKPEIHPKYTKVTVNCANCGTTFETRSTRNNNIKVDICSKCHPFYTGKQVLVDTAGRVDRFNKRFAKAAPKASAQ.

This sequence belongs to the bacterial ribosomal protein bL31 family. Type A subfamily. In terms of assembly, part of the 50S ribosomal subunit.

Its function is as follows. Binds the 23S rRNA. The sequence is that of Large ribosomal subunit protein bL31 from Chlorobaculum tepidum (strain ATCC 49652 / DSM 12025 / NBRC 103806 / TLS) (Chlorobium tepidum).